Here is a 1542-residue protein sequence, read N- to C-terminus: ABC multidrug transporter AFR1 (1542 aa).

Disordered stretches follow at residues 1–84 and 118–141; these read MSAA…LPAD and SQQS…FSRK. A compositionally biased stretch (polar residues) spans 18-41; the sequence is TATTQNPSGLANSQVTSDPVPSAT. The span at 60–69 shows a compositional bias: basic and acidic residues; sequence DKSVDAEKVE. 2 N-linked (GlcNAc...) asparagine glycosylation sites follow: Asn207 and Asn397. One can recognise an ABC transporter 1 domain in the interval 221–473; sequence LKVLGIFGVN…MIGLGYRDLP (253 aa). 5 helical membrane passes run 584 to 604, 618 to 638, 669 to 689, 694 to 714, and 726 to 746; these read FGIS…GSVY, GGLL…ELPS, VPYN…MGGL, GAFF…SAFF, and VAAR…GYMI. Asn822 is a glycosylation site (N-linked (GlcNAc...) asparagine). Residues 844–864 traverse the membrane as a helical segment; it reads FGILVGFFAFFMFLQMMFIEY. In terms of domain architecture, ABC transporter 2 spans 917-1159; it reads FTWEGLNYTV…VLIDYLERNG (243 aa). N-linked (GlcNAc...) asparagine glycosylation is present at Asn923. Residue 953 to 960 participates in ATP binding; sequence GASGAGKT. Transmembrane regions (helical) follow at residues 1253–1273, 1284–1304, 1335–1355, 1365–1385, 1390–1410, and 1516–1536; these read WTRL…FLQL, VFAI…IEPQ, MPYS…GVGF, FFLM…AVAA, ILIA…FCGV, and FGIF…AARF.

The protein belongs to the ABC transporter superfamily. ABCG family. PDR (TC 3.A.1.205) subfamily.

The protein localises to the cell membrane. It catalyses the reaction itraconazole(in) + ATP + H2O = itraconazole(out) + ADP + phosphate + H(+). The catalysed reaction is voriconazole(in) + ATP + H2O = voriconazole(out) + ADP + phosphate + H(+). It carries out the reaction fluconazole(in) + ATP + H2O = fluconazole(out) + ADP + phosphate + H(+). Major pleiotropic ABC efflux transporter that confers resistance to structurally and functionally unrelated compounds including azoles such as fluconazole (FLC), itraconazole (ITC), posaconazole (POS), and voriconazole (VRC). Is also able to efflux the eukaryote protein synthesis inhibitor cycloheximide (CHX). The sequence is that of ABC multidrug transporter AFR1 from Cryptococcus deuterogattii (strain R265) (Cryptococcus gattii VGII (strain R265)).